A 308-amino-acid chain; its full sequence is Membrane protein insertase YidC 1 (308 aa).

An N-terminal signal peptide occupies residues 1–22 (MKSIKRFALSAMGVAMLLVLTG). Residue Cys-23 is the site of N-palmitoyl cysteine attachment. Residue Cys-23 is the site of S-diacylglycerol cysteine attachment. 5 helical membrane passes run 60 to 80 (FGVA…PLGI), 135 to 155 (FGGV…AIYF), 168 to 188 (YLGI…GVLY), 211 to 226 (MIYM…SLFS), and 232 to 252 (LYWV…NYIV). The disordered stretch occupies residues 263 to 308 (ELAKNPPKASAFSKPSGRKDVTPEQPTAITSKKKHKNRNAGKQRSR). Residues 293-308 (SKKKHKNRNAGKQRSR) are compositionally biased toward basic residues.

The protein belongs to the OXA1/ALB3/YidC family. Type 2 subfamily.

Its subcellular location is the cell membrane. Functionally, required for the insertion and/or proper folding and/or complex formation of integral membrane proteins into the membrane. Involved in integration of membrane proteins that insert both dependently and independently of the Sec translocase complex, as well as at least some lipoproteins. This chain is Membrane protein insertase YidC 1, found in Streptococcus pneumoniae serotype 4 (strain ATCC BAA-334 / TIGR4).